We begin with the raw amino-acid sequence, 440 residues long: Acyltransferase Pun1 (440 aa).

Active-site proton acceptor residues include His169 and Asp384.

It belongs to the plant acyltransferase family.

It carries out the reaction vanillylamine + (6E)-8-methylnon-6-enoyl-CoA = capsaicin + CoA + H(+). It catalyses the reaction (6E)-8-methylnon-6-enoyl-CoA + 4-hydroxy-3-methoxy-benzenemethanol = capsiate + CoA. In terms of biological role, involved in the biosynthesis of capsaicinoids and capsinoids natural products, pungent alkaloids synthesized from phenylpropanoid intermediates in the placental tissue of chili pepper fruit acting as repellant on herbivorous mammals and conferring spiciness to hot peppers. Catalyzes the biosynthesis of capsaicin, a pungent component, and of capsiate, a non-pungent component, from vanillylamine and vanillyl alcohol, respectively. Can transfer an acyl from 8-methylnon-6-enoyl-CoA to vanillylamine forming capsaicin and CoA. This is Acyltransferase Pun1 from Capsicum frutescens (Cayenne pepper).